The primary structure comprises 272 residues: Catabolic 3-dehydroquinate dehydratase (272 aa).

3-dehydroquinate-binding positions include 66–68 (EFR) and arginine 102. Histidine 163 acts as the Proton donor/acceptor in catalysis. The active-site Schiff-base intermediate with substrate is lysine 190. Arginine 232, serine 251, and glutamine 255 together coordinate 3-dehydroquinate.

This sequence belongs to the type-I 3-dehydroquinase family.

It carries out the reaction 3-dehydroquinate = 3-dehydroshikimate + H2O. Its pathway is aromatic compound metabolism; 3,4-dihydroxybenzoate biosynthesis; 3,4-dihydroxybenzoate from 3-dehydroquinate: step 1/2. Functionally, involved in the biosynthesis of protocatechuate. Catalyzes the catabolic dehydration of 3-dehydroquinate (DHQ) to yield 3-dehydroshikimate. The protein is Catabolic 3-dehydroquinate dehydratase of Acinetobacter baylyi (strain ATCC 33305 / BD413 / ADP1).